A 263-amino-acid polypeptide reads, in one-letter code: Transcription factor 19-like protein (263 aa).

In terms of domain architecture, FHA spans 31 to 88 (YGLGCRADLCDVALRPQQEPGLISGVHAELHAELQGDDWRVSLEDHSSQGTLVNNVRL). The residue at position 78 (Ser78) is a Phosphoserine. Disordered stretches follow at residues 140–164 (SKGE…PLST) and 189–225 (LTFS…RKSA).

It is found in the nucleus. Its function is as follows. Potential transcription factor that may play a role in the regulation of genes involved in cell cycle G1/S transition. May bind to regulatory elements of genes, including the promoter of the transcription factor FOXO1. In Mus musculus (Mouse), this protein is Transcription factor 19-like protein (Tcf19).